Reading from the N-terminus, the 569-residue chain is Serine/threonine-protein kinase gad8 (569 aa).

The interval 19 to 63 is disordered; it reads GLNSGGSSFTRGLKNSTLSSTSSRKSSDEKSRKSSEDKRSPQSTV. Positions 31-42 are enriched in low complexity; that stretch reads LKNSTLSSTSSR. Basic and acidic residues predominate over residues 43–58; the sequence is KSSDEKSRKSSEDKRS. One can recognise a C2 domain in the interval 45–202; it reads SDEKSRKSSE…IVNKLTDEWV (158 aa). Residues 230–485 form the Protein kinase domain; the sequence is FELLKVVGKG…AQEIKNHPFF (256 aa). ATP is bound by residues 236 to 244 and Lys259; that span reads VGKGSFGKV. Asp353 functions as the Proton acceptor in the catalytic mechanism. Position 387 is a phosphothreonine; by ksg1 (Thr387). The region spanning 486 to 557 is the AGC-kinase C-terminal domain; it reads DDIDWKKLCA…QRPTTIDTSD (72 aa). Phosphoserine; by TORC2 is present on residues Ser527 and Ser546.

Belongs to the protein kinase superfamily. AGC Ser/Thr protein kinase family. Post-translationally, phosphorylated by ksg1 and target of rapamycin complex 2 (TORC2), affecting the kinase activity of gad8 in a nutrient-dependent manner.

It carries out the reaction L-seryl-[protein] + ATP = O-phospho-L-seryl-[protein] + ADP + H(+). It catalyses the reaction L-threonyl-[protein] + ATP = O-phospho-L-threonyl-[protein] + ADP + H(+). Its function is as follows. Involved in a signaling module for sexual development and cell growth under stressed conditions. Required for G1 arrest under nitrogen starvation and for growth at high temperature and osmolarity. This is Serine/threonine-protein kinase gad8 from Schizosaccharomyces pombe (strain 972 / ATCC 24843) (Fission yeast).